Consider the following 482-residue polypeptide: E3 ubiquitin-protein ligase makorin-1 (482 aa).

Low complexity predominate over residues 26-38; sequence ASPTPIPTVTAPS. Residues 26-52 form a disordered region; sequence ASPTPIPTVTAPSLGAGGGGGGSDGSG. Gly residues predominate over residues 40-52; sequence GAGGGGGGSDGSG. C3H1-type zinc fingers lie at residues 55–82, 84–111, and 208–235; these read WTKQVTCRYFMHGVCKEGDNCRYSHDLS, SPYSVVCKYFQRGYCIYGDRCRYEHSKP, and ETKKQLCPYAAVGECRYGENCVYLHGDS. The tract at residues 236–263 is makorin-type Cys-His; it reads CDMCGLQVLHPMDAAQRSQHIKSCIEAH. Residues 281–335 form an RING-type zinc finger; it reads CGICMEVVYEKANPSERRFGILSNCNHTYCLKCIRKWRSAKQFESKIIKSCPECR. The C3H1-type 4 zinc-finger motif lies at 364-393; that stretch reads AMSNKACRYFDEGRGSCPFGGNCFYKHAYP.

In terms of assembly, interacts with p53/TP53 and CDKN1A. Interacts with TERT, modulating telomere length homeostasis. Auto-ubiquitinated; which leads to proteasomal degradation. In terms of tissue distribution, ubiquitous.

The enzyme catalyses S-ubiquitinyl-[E2 ubiquitin-conjugating enzyme]-L-cysteine + [acceptor protein]-L-lysine = [E2 ubiquitin-conjugating enzyme]-L-cysteine + N(6)-ubiquitinyl-[acceptor protein]-L-lysine.. Its pathway is protein modification; protein ubiquitination. Functionally, E3 ubiquitin ligase catalyzing the covalent attachment of ubiquitin moieties onto substrate proteins. These substrates include FILIP1, p53/TP53, CDKN1A and TERT. Keeps cells alive by suppressing p53/TP53 under normal conditions, but stimulates apoptosis by repressing CDKN1A under stress conditions. Acts as a negative regulator of telomerase. Has negative and positive effects on RNA polymerase II-dependent transcription. The polypeptide is E3 ubiquitin-protein ligase makorin-1 (MKRN1) (Homo sapiens (Human)).